We begin with the raw amino-acid sequence, 746 residues long: Histone-lysine N-methyltransferase EZH2 (746 aa).

The segment at 1–340 (MGQTGKKSEK…AKEFAAALTA (340 aa)) is interaction with DNMT1, DNMT3A and DNMT3B. Position 21 is a phosphoserine; by PKB/AKT1 (serine 21). Positions 39–68 (KSMFSSNRQKILERTEILNQEWKQRRIQPV) are interaction with EED. Residue serine 75 is glycosylated (O-linked (GlcNAc) serine). Serine 76 bears the Phosphoserine mark. The interval 180 to 222 (QYNDDDDDDDGDDPEEREEKQKDLEDHRDDKESRPPRKFPSDK) is disordered. Acidic residues predominate over residues 182-195 (NDDDDDDDGDDPEE). The span at 196–222 (REEKQKDLEDHRDDKESRPPRKFPSDK) shows a compositional bias: basic and acidic residues. The interaction with CDYL stretch occupies residues 329-522 (EGAKEFAAAL…SSNHVYNYQP (194 aa)). At threonine 339 the chain carries Phosphothreonine. The disordered stretch occupies residues 340–426 (AERIKTPPKR…PIKMKPNIEP (87 aa)). Residue threonine 345 is modified to Phosphothreonine; by CDK1 and CDK2. Over residues 345–357 (TPPKRPGGRRRGR) the composition is skewed to basic residues. Serine 363 and serine 366 each carry phosphoserine. Residue threonine 367 is modified to Phosphothreonine. Positions 374-385 (ESKDTDSDREAG) are enriched in basic and acidic residues. Position 487 is a phosphothreonine (threonine 487). Positions 503-605 (CRKIQLKKDG…SKNVSCKNCS (103 aa)) constitute a CXC domain. The region spanning 612–727 (KHLLLAPSDV…TGEELFFDYR (116 aa)) is the SET domain. A Glycyl lysine isopeptide (Lys-Gly) (interchain with G-Cter in SUMO2) cross-link involves residue lysine 634.

It belongs to the class V-like SAM-binding methyltransferase superfamily. Histone-lysine methyltransferase family. EZ subfamily. In terms of assembly, component of the PRC2/EED-EZH2 complex, which includes EED, EZH2, SUZ12, RBBP4 and RBBP7 and possibly AEBP2. The minimum components required for methyltransferase activity of the PRC2/EED-EZH2 complex are EED, EZH2 and SUZ12. The PRC2 complex may also interact with DNMT1, DNMT3A, DNMT3B and PHF1 via the EZH2 subunit and with SIRT1 via the SUZ12 subunit. Interacts with HDAC1 and HDAC2. Binds ATRX via the SET domain. Interacts with PRAME. Interacts with CDYL. Interacts with BMAL1, CLOCK and CRY1. Interacts with DNMT3L; the interaction is direct. Interacts with EZHIP; the interaction blocks EZH2 methyltransferase activity. Interacts with ZNF263; recruited to the SIX3 promoter along with other proteins involved in chromatin modification and transcriptional corepression where it contributes to transcriptional repression. Interacts with ARMC12. Interacts with ZMYND8; the interaction is dependent on the presence of chromatin. Interacts with DDX18; this interaction inhibits the PRC2 complex. Phosphorylated by AKT1. Phosphorylation by AKT1 reduces methyltransferase activity. Phosphorylation at Thr-345 by CDK1 and CDK2 promotes maintenance of H3K27me3 levels at EZH2-target loci, thus leading to epigenetic gene silencing. Post-translationally, sumoylated. In terms of processing, glycosylated: O-GlcNAcylation at Ser-75 by OGT increases stability of EZH2 and facilitates the formation of H3K27me3 by the PRC2/EED-EZH2 complex.

Its subcellular location is the nucleus. It catalyses the reaction L-lysyl(27)-[histone H3] + 3 S-adenosyl-L-methionine = N(6),N(6),N(6)-trimethyl-L-lysyl(27)-[histone H3] + 3 S-adenosyl-L-homocysteine + 3 H(+). In terms of biological role, polycomb group (PcG) protein. Catalytic subunit of the PRC2/EED-EZH2 complex, which methylates 'Lys-9' (H3K9me) and 'Lys-27' (H3K27me) of histone H3, leading to transcriptional repression of the affected target gene. Able to mono-, di- and trimethylate 'Lys-27' of histone H3 to form H3K27me1, H3K27me2 and H3K27me3, respectively. Displays a preference for substrates with less methylation, loses activity when progressively more methyl groups are incorporated into H3K27, H3K27me0 &gt; H3K27me1 &gt; H3K27me2. Compared to EZH1-containing complexes, it is more abundant in embryonic stem cells and plays a major role in forming H3K27me3, which is required for embryonic stem cell identity and proper differentiation. The PRC2/EED-EZH2 complex may also serve as a recruiting platform for DNA methyltransferases, thereby linking two epigenetic repression systems. EZH2 can also methylate non-histone proteins such as the transcription factor GATA4 and the nuclear receptor RORA. Regulates the circadian clock via histone methylation at the promoter of the circadian genes. Essential for the CRY1/2-mediated repression of the CLOCK-BMAL1 transcriptional activation of PER1/2. Involved in the di and trimethylation of 'Lys-27' of histone H3 on PER1/2 promoters which is necessary for the CRY1/2 proteins to inhibit transcription. The protein is Histone-lysine N-methyltransferase EZH2 (EZH2) of Macaca fascicularis (Crab-eating macaque).